We begin with the raw amino-acid sequence, 243 residues long: Exosome complex component Rrp41 (243 aa).

The protein belongs to the RNase PH family. Rrp41 subfamily. As to quaternary structure, component of the archaeal exosome complex. Forms a hexameric ring-like arrangement composed of 3 Rrp41-Rrp42 heterodimers. The hexameric ring associates with a trimer of Rrp4 and/or Csl4 subunits.

The protein resides in the cytoplasm. In terms of biological role, catalytic component of the exosome, which is a complex involved in RNA degradation. Has 3'-&gt;5' exoribonuclease activity. Can also synthesize heteromeric RNA-tails. The chain is Exosome complex component Rrp41 from Sulfolobus acidocaldarius (strain ATCC 33909 / DSM 639 / JCM 8929 / NBRC 15157 / NCIMB 11770).